A 239-amino-acid chain; its full sequence is Myogenic factor 6 (239 aa).

The interval 28–59 is disordered; it reads PGVSPLYEGNDSPLSPGQDPVPSETGCESSGE. A bHLH domain is found at 92–143; that stretch reads DRRKAATLRERRRLKKINEAFDALKKKTVPNPNQRLPKVEILRSAINYIEKL. Residues 182–196 are compositionally biased toward polar residues; the sequence is CQSWQENPDHSSSQM. The segment at 182–239 is disordered; the sequence is CQSWQENPDHSSSQMAGHREGAVLESSESSSLRRLSSIVDSISTEEPKARCPSQISEK. Residues 204–223 are compositionally biased toward low complexity; that stretch reads VLESSESSSLRRLSSIVDSI.

In terms of assembly, efficient DNA binding requires dimerization with another bHLH protein.

The protein localises to the nucleus. In terms of biological role, involved in muscle differentiation (myogenic factor). Induces fibroblasts to differentiate into myoblasts. Probable sequence specific DNA-binding protein. The protein is Myogenic factor 6 (myf6) of Danio rerio (Zebrafish).